The following is a 1465-amino-acid chain: MGAATSALNRRQLDKFEHIRLRPTGKKKYQIKHLIWAGKEMERFGLHERLLESEEGCKKIIEVLYPLEPTGSEGLKSLFNLVCVLFCVHKDKEVKDTEEAVAIVRQCCHLVEKERNAERNTTETSSGQKKNDKGVTVPPGGSQNFPAQQQGNAWIHVPLSPRTLNAWVKAVEEKKFGAEIVPMFQALSEGCTPYDINQMLNVLGDHQGALQIVKEIINEEAAQWDIAHPPPAGPLPAGQLRDPRGSDIAGTTSTVQEQLEWIYTANPRVDVGAIYRRWIILGLQKCVKMYNPVSVLDIRQGPKEAFKDYVDRFYKAIRAEQASGEVKQWMTESLLIQNANPDCKVILKGLGMHPTLEEMLTACQGVGGPSYKAKVMAEMMQNMQSQNMMQQGGQRGRPRPPVKCYNCGKFGHMQRQCPEPRKMRCLKCGKPGHLAKDCRGQVNFFRVWPVDGSETQKFSRRYSWGGANCAPSTESIRPCKEAPAAICRQGEAVEGTKEKTTSSESRLDRGIFFELPLWRRPIKTVYIEGVPIRALLDTGADDTIIKEADLQLSGTWKPKIIGGIGGGLNVKEYSDREVRLEDKILRGTILIGSTPINIIGRNILAPAGAKLVMGQLSEQIPITPVKLKEGARGPFLKQWPLSKEKIKALQEICDQLEKEGKISKIGGENAYNTPVFCIKKKDKSQWRMLVDFRELNKATQDFFEVQLGIPHPSGFEKMTEITVLDIGDAYYSIPLDPEFRKYTAFTIPSVNNQGPGTRYQFNCLPQGWKGSPTIFQNTAASILEEIKKELKPLTIVQYMDDLWVGSQEDEYTHDRLVEQLRMKLSAWGLETPDKKVQKKPPYEWMGYKLWPHKWQISSIELEDKEEWTVNDIQRLVGKLNWAAQLYPGLRTKNLCKLIRGKKNLLETVTWTEEAEAEYAENKEILKTEQEGTYYKPGRPIRAAVQKLEGGQWSYQFKQEGQVLKVGKYTKQKNTHTNEFRVLAGLVQKLCKESLVIWGELPVLELPIEREVWEQWWADYWQVSWIPDWEFVSTPPLVKLWYTLTKEPIPKEDVYYVDGACNRNSREGKAGYITQYGKQRVEKLENTTNQQAELMAIKMALEDSGPNVNIVTDSQYAMGILTAQPTQSDSPLIEQIIALMVQKHQIYLQWVPADKGIGGNEEIDKLVSQGMRKILFLEKIEEAQEEHERYHNNWRNLADTYGLPQIVAKEIVAMCPKCQIKGEPVHGQVDASPGVWQMDCTHLEGKVIIVAVHVASGFIEAEVIPRETGKETAKFLLKILSRWPITQLHTDNGPNFTSQEVAAMCWWGKIEHTTGVPYNPQSQGSIESMNKQLKEIIGKIRDDCQYTETAVLMACHIHNFKRKGGIGGLTPAERLINMITTQLELQHLQTKIQKILNFRVYYREGRDPVWKGPGQLIWKGEGAVVIKGGVELKEYPRRKAKIIKDYEPRKRMGDESNLEGAGGADN.

A lipid anchor (N-myristoyl glycine; by host) is attached at Gly2. The Nuclear export signal signature appears at 16–22; sequence FEHIRLR. The short motif at 26–32 is the Nuclear localization signal element; sequence KKKYQIK. The tract at residues 116 to 144 is disordered; the sequence is NAERNTTETSSGQKKNDKGVTVPPGGSQN. 2 CCHC-type zinc fingers span residues 402 to 419 and 423 to 440; these read VKCYNCGKFGHMQRQCPE and MRCLKCGKPGHLAKDCRG. A Peptidase A2 domain is found at 532–603; sequence IRALLDTGAD…TPINIIGRNI (72 aa). Residue Asp537 is the For protease activity; shared with dimeric partner of the active site. A Reverse transcriptase domain is found at 659–849; that stretch reads EGKISKIGGE…PPYEWMGYKL (191 aa). Residues Asp725, Asp800, and Asp801 each contribute to the Mg(2+) site. Residues 842–850 are RT 'primer grip'; it reads YEWMGYKLW. The Tryptophan repeat motif motif lies at 1012–1028; sequence WEQWWADYWQVSWIPDW. Positions 1048-1171 constitute an RNase H type-1 domain; the sequence is IPKEDVYYVD…IDKLVSQGMR (124 aa). Asp1057, Glu1092, Asp1112, and Asp1163 together coordinate Mg(2+). The segment at 1177–1218 adopts an Integrase-type zinc-finger fold; sequence EKIEEAQEEHERYHNNWRNLADTYGLPQIVAKEIVAMCPKCQ. Residues His1186, His1190, Cys1214, and Cys1217 each contribute to the Zn(2+) site. One can recognise an Integrase catalytic domain in the interval 1228–1378; sequence VDASPGVWQM…TPAERLINMI (151 aa). Positions 1238 and 1290 each coordinate Mg(2+). Positions 1397-1444 form a DNA-binding region, integrase-type; sequence FRVYYREGRDPVWKGPGQLIWKGEGAVVIKGGVELKEYPRRKAKIIKD.

In terms of assembly, homotrimer. Interacts with gp41 (via C-terminus). As to quaternary structure, homodimer. The active site consists of two apposed aspartic acid residues. Heterodimer of p66 RT and p51 RT (RT p66/p51). Heterodimerization of RT is essential for DNA polymerase activity. Despite the sequence identities, p66 RT and p51 RT have distinct folding. In terms of assembly, homotetramer; may further associate as a homohexadecamer. Mg(2+) serves as cofactor. In terms of processing, specific enzymatic cleavages by the viral protease yield mature proteins. The protease is released by autocatalytic cleavage. The polyprotein is cleaved during and after budding, this process is termed maturation. Proteolytic cleavage of p66 RT removes the RNase H domain to yield the p51 RT subunit. Post-translationally, capsid protein p24 is phosphorylated.

The protein localises to the virion. It localises to the host nucleus. It is found in the host cytoplasm. The protein resides in the host cell membrane. The enzyme catalyses Specific for a P1 residue that is hydrophobic, and P1' variable, but often Pro.. It carries out the reaction Endohydrolysis of RNA in RNA/DNA hybrids. Three different cleavage modes: 1. sequence-specific internal cleavage of RNA. Human immunodeficiency virus type 1 and Moloney murine leukemia virus enzymes prefer to cleave the RNA strand one nucleotide away from the RNA-DNA junction. 2. RNA 5'-end directed cleavage 13-19 nucleotides from the RNA end. 3. DNA 3'-end directed cleavage 15-20 nucleotides away from the primer terminus.. It catalyses the reaction 3'-end directed exonucleolytic cleavage of viral RNA-DNA hybrid.. The catalysed reaction is DNA(n) + a 2'-deoxyribonucleoside 5'-triphosphate = DNA(n+1) + diphosphate. With respect to regulation, the viral protease is inhibited by many synthetic protease inhibitors (PIs), such as amprenavir, atazanavir, indinavir, loprinavir, nelfinavir, ritonavir and saquinavir. RT can be inhibited either by nucleoside RT inhibitors (NRTIs) or by non nucleoside RT inhibitors (NNRTIs). NRTIs act as chain terminators, whereas NNRTIs inhibit DNA polymerization by binding a small hydrophobic pocket near the RT active site and inducing an allosteric change in this region. Classical NRTIs are abacavir, adefovir (PMEA), didanosine (ddI), lamivudine (3TC), stavudine (d4T), tenofovir (PMPA), zalcitabine (ddC), and zidovudine (AZT). Classical NNRTIs are atevirdine (BHAP U-87201E), delavirdine, efavirenz (DMP-266), emivirine (I-EBU), and nevirapine (BI-RG-587). The tritherapies used as a basic effective treatment of AIDS associate two NRTIs and one NNRTI. Use of protease inhibitors in tritherapy regimens permit more ambitious therapeutic strategies. Gag-Pol polyprotein and Gag polyprotein may regulate their own translation, by the binding genomic RNA in the 5'-UTR. At low concentration, Gag-Pol and Gag would promote translation, whereas at high concentration, the polyproteins encapsidate genomic RNA and then shut off translation. Functionally, matrix protein p17 has two main functions: in infected cell, it targets Gag and Gag-pol polyproteins to the plasma membrane via a multipartite membrane-binding signal, that includes its myristointegration complex. The myristoylation signal and the NLS exert conflicting influences its subcellular localization. The key regulation of these motifs might be phosphorylation of a portion of MA molecules on the C-terminal tyrosine at the time of virus maturation, by virion-associated cellular tyrosine kinase. Implicated in the release from host cell mediated by Vpu. In terms of biological role, capsid protein p24 forms the conical core that encapsulates the genomic RNA-nucleocapsid complex in the virion. The core is constituted by capsid protein hexamer subunits. The core is disassembled soon after virion entry. Interaction with host PPIA/CYPA protects the virus from restriction by host TRIM5-alpha and from an unknown antiviral activity in host cells. This capsid restriction by TRIM5 is one of the factors which restricts SIV to the simian species. Its function is as follows. Nucleocapsid protein p7 encapsulates and protects viral dimeric unspliced (genomic) RNA. Binds these RNAs through its zinc fingers. Facilitates rearangement of nucleic acid secondary structure during retrotranscription of genomic RNA. This capability is referred to as nucleic acid chaperone activity. The aspartyl protease mediates proteolytic cleavages of Gag and Gag-Pol polyproteins during or shortly after the release of the virion from the plasma membrane. Cleavages take place as an ordered, step-wise cascade to yield mature proteins. This process is called maturation. Displays maximal activity during the budding process just prior to particle release from the cell. Also cleaves Nef and Vif, probably concomitantly with viral structural proteins on maturation of virus particles. Hydrolyzes host EIF4GI and PABP1 in order to shut off the capped cellular mRNA translation. The resulting inhibition of cellular protein synthesis serves to ensure maximal viral gene expression and to evade host immune response. Functionally, reverse transcriptase/ribonuclease H (RT) is a multifunctional enzyme that converts the viral dimeric RNA genome into dsDNA in the cytoplasm, shortly after virus entry into the cell. This enzyme displays a DNA polymerase activity that can copy either DNA or RNA templates, and a ribonuclease H (RNase H) activity that cleaves the RNA strand of RNA-DNA heteroduplexes in a partially processive 3' to 5' endonucleasic mode. Conversion of viral genomic RNA into dsDNA requires many steps. A tRNA binds to the primer-binding site (PBS) situated at the 5'-end of the viral RNA. RT uses the 3' end of the tRNA primer to perform a short round of RNA-dependent minus-strand DNA synthesis. The reading proceeds through the U5 region and ends after the repeated (R) region which is present at both ends of viral RNA. The portion of the RNA-DNA heteroduplex is digested by the RNase H, resulting in a ssDNA product attached to the tRNA primer. This ssDNA/tRNA hybridizes with the identical R region situated at the 3' end of viral RNA. This template exchange, known as minus-strand DNA strong stop transfer, can be either intra- or intermolecular. RT uses the 3' end of this newly synthesized short ssDNA to perform the RNA-dependent minus-strand DNA synthesis of the whole template. RNase H digests the RNA template except for two polypurine tracts (PPTs) situated at the 5'-end and near the center of the genome. It is not clear if both polymerase and RNase H activities are simultaneous. RNase H can probably proceed both in a polymerase-dependent (RNA cut into small fragments by the same RT performing DNA synthesis) and a polymerase-independent mode (cleavage of remaining RNA fragments by free RTs). Secondly, RT performs DNA-directed plus-strand DNA synthesis using the PPTs that have not been removed by RNase H as primers. PPTs and tRNA primers are then removed by RNase H. The 3' and 5' ssDNA PBS regions hybridize to form a circular dsDNA intermediate. Strand displacement synthesis by RT to the PBS and PPT ends produces a blunt ended, linear dsDNA copy of the viral genome that includes long terminal repeats (LTRs) at both ends. In terms of biological role, integrase catalyzes viral DNA integration into the host chromosome, by performing a series of DNA cutting and joining reactions. This enzyme activity takes place after virion entry into a cell and reverse transcription of the RNA genome in dsDNA. The first step in the integration process is 3' processing. This step requires a complex comprising the viral genome, matrix protein, Vpr and integrase. This complex is called the pre-integration complex (PIC). The integrase protein removes 2 nucleotides from each 3' end of the viral DNA, leaving recessed CA OH's at the 3' ends. In the second step, the PIC enters cell nucleus. This process is mediated through integrase and Vpr proteins, and allows the virus to infect a non dividing cell. This ability to enter the nucleus is specific of lentiviruses, other retroviruses cannot and rely on cell division to access cell chromosomes. In the third step, termed strand transfer, the integrase protein joins the previously processed 3' ends to the 5' ends of strands of target cellular DNA at the site of integration. The 5'-ends are produced by integrase-catalyzed staggered cuts, 5 bp apart. A Y-shaped, gapped, recombination intermediate results, with the 5'-ends of the viral DNA strands and the 3' ends of target DNA strands remaining unjoined, flanking a gap of 5 bp. The last step is viral DNA integration into host chromosome. This involves host DNA repair synthesis in which the 5 bp gaps between the unjoined strands are filled in and then ligated. Since this process occurs at both cuts flanking the SIV genome, a 5 bp duplication of host DNA is produced at the ends of SIV integration. Alternatively, Integrase may catalyze the excision of viral DNA just after strand transfer, this is termed disintegration. In Cercopithecidae (Old World monkeys), this protein is Gag-Pol polyprotein (gag-pol).